The primary structure comprises 32 residues: MASEIFGIAAVFWVLIPVGLAGGALLLKLQGD.

Residues 9–27 (AAVFWVLIPVGLAGGALLL) form a helical membrane-spanning segment.

This sequence belongs to the PetM family. As to quaternary structure, the 4 large subunits of the cytochrome b6-f complex are cytochrome b6, subunit IV (17 kDa polypeptide, PetD), cytochrome f and the Rieske protein, while the 4 small subunits are PetG, PetL, PetM and PetN. The complex functions as a dimer.

The protein localises to the cellular thylakoid membrane. Its function is as follows. Component of the cytochrome b6-f complex, which mediates electron transfer between photosystem II (PSII) and photosystem I (PSI), cyclic electron flow around PSI, and state transitions. This chain is Cytochrome b6-f complex subunit 7, found in Prochlorococcus marinus (strain MIT 9303).